Here is an 874-residue protein sequence, read N- to C-terminus: Alanine--tRNA ligase (874 aa).

Positions 562, 566, 665, and 669 each coordinate Zn(2+).

Belongs to the class-II aminoacyl-tRNA synthetase family. It depends on Zn(2+) as a cofactor.

The protein localises to the cytoplasm. The catalysed reaction is tRNA(Ala) + L-alanine + ATP = L-alanyl-tRNA(Ala) + AMP + diphosphate. Functionally, catalyzes the attachment of alanine to tRNA(Ala) in a two-step reaction: alanine is first activated by ATP to form Ala-AMP and then transferred to the acceptor end of tRNA(Ala). Also edits incorrectly charged Ser-tRNA(Ala) and Gly-tRNA(Ala) via its editing domain. This Pseudomonas paraeruginosa (strain DSM 24068 / PA7) (Pseudomonas aeruginosa (strain PA7)) protein is Alanine--tRNA ligase.